A 323-amino-acid polypeptide reads, in one-letter code: Lipid A biosynthesis acyltransferase 1 (323 aa).

Residues 23-43 traverse the membrane as a helical segment; sequence YWGAWLGVAAMAGIALTPPKF. The short motif at 139–144 is the HXXXXD motif element; the sequence is HGWAVD.

This sequence belongs to the LpxL/LpxM/LpxP family. LpxM subfamily.

It localises to the cell inner membrane. The enzyme catalyses an alpha-Kdo-(2-&gt;4)-alpha-Kdo-(2-&gt;6)-(acyl)-lipid IVA + a fatty acyl-[ACP] = an alpha-Kdo-(2-&gt;4)-alpha-Kdo-(2-&gt;6)-lipid A + holo-[ACP]. It functions in the pathway glycolipid biosynthesis; KDO(2)-lipid A biosynthesis; KDO(2)-lipid A from CMP-3-deoxy-D-manno-octulosonate and lipid IV(A): step 4/4. It participates in bacterial outer membrane biogenesis; lipopolysaccharide biosynthesis. Functionally, catalyzes the transfer of an acyl chain from an acyl-[acyl-carrier-protein] (ACP) to a Kdo(2)-(acyl)-lipid IV(A) to form a Kdo(2)-lipid A. The protein is Lipid A biosynthesis acyltransferase 1 of Shigella flexneri.